Consider the following 44-residue polypeptide: MESLLLARLPEAYVVFSPLVDVFPVIPVFFLLLAFVWQAAVGFR.

Residues 1–7 constitute a propeptide that is removed on maturation; it reads MESLLLA. A helical transmembrane segment spans residues 23–43; the sequence is FPVIPVFFLLLAFVWQAAVGF.

It belongs to the PsbK family. As to quaternary structure, PSII is composed of 1 copy each of membrane proteins PsbA, PsbB, PsbC, PsbD, PsbE, PsbF, PsbH, PsbI, PsbJ, PsbK, PsbL, PsbM, PsbT, PsbX, PsbY, PsbZ, Psb30/Ycf12, at least 3 peripheral proteins of the oxygen-evolving complex and a large number of cofactors. It forms dimeric complexes.

The protein localises to the plastid. The protein resides in the chloroplast thylakoid membrane. In terms of biological role, one of the components of the core complex of photosystem II (PSII). PSII is a light-driven water:plastoquinone oxidoreductase that uses light energy to abstract electrons from H(2)O, generating O(2) and a proton gradient subsequently used for ATP formation. It consists of a core antenna complex that captures photons, and an electron transfer chain that converts photonic excitation into a charge separation. In Thalassiosira pseudonana (Marine diatom), this protein is Photosystem II reaction center protein K.